An 862-amino-acid polypeptide reads, in one-letter code: DNA mismatch repair protein MutS (862 aa).

Residue 621-628 (GPNMGGKS) coordinates ATP.

The protein belongs to the DNA mismatch repair MutS family.

Functionally, this protein is involved in the repair of mismatches in DNA. It is possible that it carries out the mismatch recognition step. This protein has a weak ATPase activity. The polypeptide is DNA mismatch repair protein MutS (Vibrio cholerae serotype O1 (strain ATCC 39541 / Classical Ogawa 395 / O395)).